The sequence spans 482 residues: tRNA sulfurtransferase (482 aa).

Residues 61–165 (AEVLEILTHT…NDRLNQVLAS (105 aa)) enclose the THUMP domain. ATP is bound by residues 183-184 (LI), lysine 265, glycine 287, and glutamine 296. A disulfide bridge connects residues cysteine 344 and cysteine 456. Residues 404–482 (VEEHAIVLDI…GFNNVKVYRP (79 aa)) form the Rhodanese domain. Cysteine 456 functions as the Cysteine persulfide intermediate in the catalytic mechanism.

Belongs to the ThiI family.

It localises to the cytoplasm. The enzyme catalyses [ThiI sulfur-carrier protein]-S-sulfanyl-L-cysteine + a uridine in tRNA + 2 reduced [2Fe-2S]-[ferredoxin] + ATP + H(+) = [ThiI sulfur-carrier protein]-L-cysteine + a 4-thiouridine in tRNA + 2 oxidized [2Fe-2S]-[ferredoxin] + AMP + diphosphate. The catalysed reaction is [ThiS sulfur-carrier protein]-C-terminal Gly-Gly-AMP + S-sulfanyl-L-cysteinyl-[cysteine desulfurase] + AH2 = [ThiS sulfur-carrier protein]-C-terminal-Gly-aminoethanethioate + L-cysteinyl-[cysteine desulfurase] + A + AMP + 2 H(+). It functions in the pathway cofactor biosynthesis; thiamine diphosphate biosynthesis. Functionally, catalyzes the ATP-dependent transfer of a sulfur to tRNA to produce 4-thiouridine in position 8 of tRNAs, which functions as a near-UV photosensor. Also catalyzes the transfer of sulfur to the sulfur carrier protein ThiS, forming ThiS-thiocarboxylate. This is a step in the synthesis of thiazole, in the thiamine biosynthesis pathway. The sulfur is donated as persulfide by IscS. In Vibrio campbellii (strain ATCC BAA-1116), this protein is tRNA sulfurtransferase.